A 398-amino-acid chain; its full sequence is MRASYLFTSESVSEGHPDKVCDRISDEVVDLFFREGPKAGIDPWAIRAACETLATTNKVVIAGETRGPASVTNDQIESVVRAAIKDIGYEQEGFHWDTCDIEILLHPQSADIAQGVDALQPGTNKEEGAGDQGIMFGYATNETPDLMPAPIFYAHKILRLISEARHSGKEKVLGPDSKSQVTIQYENGKPVGVREIVVSHQHLVEDMTSNQVRERVEPYVRQALPDGWITDKTIWHINPTGKFYIGGPDGDTGLTGRKIIVDTYGGAAPHGGGAFSGKDPTKVDRSAAYASRYLAKNIVAAGLADRCTLQLAYAIGVARPLSIYIDTHGTGKVSEDKLEKAVAEAMDLTPRGIRSHLDLNKPIYARTSSYGHFGRTPDADGGFSWEKTDLADALKRAV.

An ATP-binding site is contributed by histidine 16. Aspartate 18 provides a ligand contact to Mg(2+). Residue glutamate 51 participates in K(+) binding. Glutamate 64 and glutamine 108 together coordinate L-methionine. A flexible loop region spans residues 108–118; the sequence is QSADIAQGVDA. Residues 176 to 178, 242 to 243, aspartate 251, 257 to 258, alanine 274, and lysine 278 contribute to the ATP site; these read DSK, KF, and RK. Position 251 (aspartate 251) interacts with L-methionine. Residue lysine 282 participates in L-methionine binding.

This sequence belongs to the AdoMet synthase family. Homotetramer; dimer of dimers. It depends on Mg(2+) as a cofactor. K(+) is required as a cofactor.

The protein resides in the cytoplasm. It carries out the reaction L-methionine + ATP + H2O = S-adenosyl-L-methionine + phosphate + diphosphate. It participates in amino-acid biosynthesis; S-adenosyl-L-methionine biosynthesis; S-adenosyl-L-methionine from L-methionine: step 1/1. Functionally, catalyzes the formation of S-adenosylmethionine (AdoMet) from methionine and ATP. The overall synthetic reaction is composed of two sequential steps, AdoMet formation and the subsequent tripolyphosphate hydrolysis which occurs prior to release of AdoMet from the enzyme. This is S-adenosylmethionine synthase from Rhodopseudomonas palustris (strain HaA2).